The following is a 149-amino-acid chain: Nucleoside diphosphate kinase (149 aa).

ATP is bound by residues K9, F57, R85, T91, R102, and N112. Residue H115 is the Pros-phosphohistidine intermediate of the active site.

The protein belongs to the NDK family. Requires Mg(2+) as cofactor.

Its subcellular location is the cytoplasm. It carries out the reaction a 2'-deoxyribonucleoside 5'-diphosphate + ATP = a 2'-deoxyribonucleoside 5'-triphosphate + ADP. The catalysed reaction is a ribonucleoside 5'-diphosphate + ATP = a ribonucleoside 5'-triphosphate + ADP. Major role in the synthesis of nucleoside triphosphates other than ATP. The ATP gamma phosphate is transferred to the NDP beta phosphate via a ping-pong mechanism, using a phosphorylated active-site intermediate. The protein is Nucleoside diphosphate kinase of Methanospirillum hungatei JF-1 (strain ATCC 27890 / DSM 864 / NBRC 100397 / JF-1).